Consider the following 234-residue polypeptide: Endonuclease V (234 aa).

Asp36 and Asp104 together coordinate Mg(2+).

Belongs to the endonuclease V family. It depends on Mg(2+) as a cofactor.

The protein localises to the cytoplasm. The catalysed reaction is Endonucleolytic cleavage at apurinic or apyrimidinic sites to products with a 5'-phosphate.. Its function is as follows. DNA repair enzyme involved in the repair of deaminated bases. Selectively cleaves double-stranded DNA at the second phosphodiester bond 3' to a deoxyinosine leaving behind the intact lesion on the nicked DNA. This Yersinia pestis protein is Endonuclease V.